A 362-amino-acid chain; its full sequence is Methylthioribose-1-phosphate isomerase (362 aa).

The active-site Proton donor is the D252.

The protein belongs to the eIF-2B alpha/beta/delta subunits family. MtnA subfamily.

The protein localises to the cytoplasm. It is found in the nucleus. It carries out the reaction 5-(methylsulfanyl)-alpha-D-ribose 1-phosphate = 5-(methylsulfanyl)-D-ribulose 1-phosphate. It participates in amino-acid biosynthesis; L-methionine biosynthesis via salvage pathway; L-methionine from S-methyl-5-thio-alpha-D-ribose 1-phosphate: step 1/6. Functionally, catalyzes the interconversion of methylthioribose-1-phosphate (MTR-1-P) into methylthioribulose-1-phosphate (MTRu-1-P). In Drosophila mojavensis (Fruit fly), this protein is Methylthioribose-1-phosphate isomerase.